Reading from the N-terminus, the 110-residue chain is Phosphoribosyl-ATP pyrophosphatase (110 aa).

It belongs to the PRA-PH family.

It localises to the cytoplasm. It carries out the reaction 1-(5-phospho-beta-D-ribosyl)-ATP + H2O = 1-(5-phospho-beta-D-ribosyl)-5'-AMP + diphosphate + H(+). It functions in the pathway amino-acid biosynthesis; L-histidine biosynthesis; L-histidine from 5-phospho-alpha-D-ribose 1-diphosphate: step 2/9. The polypeptide is Phosphoribosyl-ATP pyrophosphatase (Pseudomonas syringae pv. tomato (strain ATCC BAA-871 / DC3000)).